The chain runs to 398 residues: DNA polymerase IV (398 aa).

The UmuC domain maps to 5 to 187; sequence IFLVDMNAFF…LSIKSMHGVG (183 aa). The Mg(2+) site is built by Asp9 and Asp105. Glu106 is a catalytic residue.

Belongs to the DNA polymerase type-Y family. As to quaternary structure, monomer. It depends on Mg(2+) as a cofactor.

The protein localises to the cytoplasm. It carries out the reaction DNA(n) + a 2'-deoxyribonucleoside 5'-triphosphate = DNA(n+1) + diphosphate. Poorly processive, error-prone DNA polymerase involved in untargeted mutagenesis. Copies undamaged DNA at stalled replication forks, which arise in vivo from mismatched or misaligned primer ends. These misaligned primers can be extended by PolIV. Exhibits no 3'-5' exonuclease (proofreading) activity. May be involved in translesional synthesis, in conjunction with the beta clamp from PolIII. The protein is DNA polymerase IV of Alkaliphilus oremlandii (strain OhILAs) (Clostridium oremlandii (strain OhILAs)).